The primary structure comprises 218 residues: Large ribosomal subunit protein uL3 (218 aa).

Residues 137–157 (GVGASHGAHKNHRKPGSIGGA) are disordered.

This sequence belongs to the universal ribosomal protein uL3 family. As to quaternary structure, part of the 50S ribosomal subunit. Forms a cluster with proteins L14 and L19.

In terms of biological role, one of the primary rRNA binding proteins, it binds directly near the 3'-end of the 23S rRNA, where it nucleates assembly of the 50S subunit. The protein is Large ribosomal subunit protein uL3 of Kocuria rhizophila (strain ATCC 9341 / DSM 348 / NBRC 103217 / DC2201).